The sequence spans 397 residues: Probable peptidoglycan glycosyltransferase FtsW (397 aa).

At methionine 1–aspartate 18 the chain is on the cytoplasmic side. The chain crosses the membrane as a helical span at residues leucine 19–alanine 39. The Periplasmic segment spans residues serine 40 to histidine 58. The chain crosses the membrane as a helical span at residues leucine 59–tryptophan 79. Topologically, residues tryptophan 80 to glutamine 83 are cytoplasmic. The helical transmembrane segment at serine 84–glycine 104 threads the bilayer. At arginine 105–arginine 112 the chain is on the periplasmic side. The helical transmembrane segment at tryptophan 113–isoleucine 133 threads the bilayer. Topologically, residues tyrosine 134–glycine 148 are cytoplasmic. A helical membrane pass occupies residues serine 149–methionine 169. Topologically, residues glutamate 170 to aspartate 172 are periplasmic. Residues phenylalanine 173–alanine 193 form a helical membrane-spanning segment. Residues leucine 194–arginine 196 lie on the Cytoplasmic side of the membrane. A helical membrane pass occupies residues phenylalanine 197 to tyrosine 217. The Periplasmic portion of the chain corresponds to arginine 218–aspartate 272. The chain crosses the membrane as a helical span at residues phenylalanine 273 to leucine 293. The Cytoplasmic portion of the chain corresponds to phenylalanine 294–asparagine 316. A helical membrane pass occupies residues alanine 317–valine 337. Topologically, residues asparagine 338 to threonine 348 are periplasmic. A helical membrane pass occupies residues leucine 349–leucine 369. The Cytoplasmic portion of the chain corresponds to leucine 370–arginine 397.

Belongs to the SEDS family. FtsW subfamily.

The protein resides in the cell inner membrane. It carries out the reaction [GlcNAc-(1-&gt;4)-Mur2Ac(oyl-L-Ala-gamma-D-Glu-L-Lys-D-Ala-D-Ala)](n)-di-trans,octa-cis-undecaprenyl diphosphate + beta-D-GlcNAc-(1-&gt;4)-Mur2Ac(oyl-L-Ala-gamma-D-Glu-L-Lys-D-Ala-D-Ala)-di-trans,octa-cis-undecaprenyl diphosphate = [GlcNAc-(1-&gt;4)-Mur2Ac(oyl-L-Ala-gamma-D-Glu-L-Lys-D-Ala-D-Ala)](n+1)-di-trans,octa-cis-undecaprenyl diphosphate + di-trans,octa-cis-undecaprenyl diphosphate + H(+). It participates in cell wall biogenesis; peptidoglycan biosynthesis. In terms of biological role, peptidoglycan polymerase that is essential for cell division. This Hahella chejuensis (strain KCTC 2396) protein is Probable peptidoglycan glycosyltransferase FtsW.